We begin with the raw amino-acid sequence, 199 residues long: Early activation antigen CD69 (199 aa).

The segment at 1–29 (MSSENCFVAENSSLHPESGQENDATSPHF) is disordered. The Cytoplasmic segment spans residues 1–40 (MSSENCFVAENSSLHPESGQENDATSPHFSTRHEGSFQVP). Residues 41 to 61 (VLCAVMNVVFITILIIALIAL) form a helical; Signal-anchor for type II membrane protein membrane-spanning segment. Over 62-199 (SVGQYNCPGQ…LYWICNKPYK (138 aa)) the chain is Extracellular. 3 disulfides stabilise this stretch: C85–C96, C113–C194, and C173–C186. The 104-residue stretch at 92–195 (YQRKCYFIST…CEKNLYWICN (104 aa)) folds into the C-type lectin domain. N166 is a glycosylation site (N-linked (GlcNAc...) asparagine).

In terms of assembly, homodimer; disulfide-linked. Interacts with S100A8 and S100A9. Interacts with galactin-1/LGALS1. Interacts with S1PR1; this interaction mediates S1PR1 degradation. Constitutive Ser/Thr phosphorylation in both mature thymocytes and activated T-lymphocytes. Expressed on the surface of activated T-cells, B-cells, natural killer cells, neutrophils, eosinophils, epidermal Langerhans cells and platelets.

It is found in the cell membrane. In terms of biological role, transmembrane protein expressed mainly on T-cells resident in mucosa that plays an essential role in immune cell homeostasis. Rapidly expressed on the surface of platelets, T-lymphocytes and NK cells upon activation by various stimuli, such as antigen recognition or cytokine signaling, stimulates different signaling pathways in different cell types. Negatively regulates Th17 cell differentiation through its carbohydrate dependent interaction with galectin-1/LGALS1 present on immature dendritic cells. Association of CD69 cytoplasmic tail with the JAK3/STAT5 signaling pathway regulates the transcription of RORgamma/RORC and, consequently, differentiation toward the Th17 lineage. Also acts via the S100A8/S100A9 complex present on peripheral blood mononuclear cells to promote the conversion of naive CD4 T-cells into regulatory T-cells. Acts as an oxidized low-density lipoprotein (oxLDL) receptor in CD4 T-lymphocytes and negatively regulates the inflammatory response by inducing the expression of PDCD1 through the activation of NFAT. Participates in adipose tissue-derived mesenchymal stem cells (ASCs)-mediated protection against P.aeruginosa infection. Mechanistically, specifically recognizes P.aeruginosa to promote ERK1 activation, followed by granulocyte-macrophage colony-stimulating factor (GM-CSF) and other inflammatory cytokines secretion. In eosinophils, induces IL-10 production through the ERK1/2 pathway. Negatively regulates the chemotactic responses of effector lymphocytes and dendritic cells (DCs) to sphingosine 1 phosphate/S1P by acting as a S1PR1 receptor agonist and facilitating the internalization and degradation of the receptor. This chain is Early activation antigen CD69 (CD69), found in Homo sapiens (Human).